Consider the following 269-residue polypeptide: Undecaprenyl-diphosphatase (269 aa).

Helical transmembrane passes span 42–62, 83–103, 110–130, 142–162, 186–206, 219–239, and 247–267; these read WDTFIVLIQLGAVLGVVALYF, LTVLIGCIPAFAAGLALHGVI, PYLPQVICVSLILGGVILLVV, GMALSLKTAALIGLFQCLSLL, AEFSFFMAIPIMVGAFALDLL, AIAIGFVVSFLSGLVVVKFLI, and FTPFAWWRIVVGVIGLGLIYI.

The protein belongs to the UppP family.

It is found in the cell inner membrane. The catalysed reaction is di-trans,octa-cis-undecaprenyl diphosphate + H2O = di-trans,octa-cis-undecaprenyl phosphate + phosphate + H(+). Its function is as follows. Catalyzes the dephosphorylation of undecaprenyl diphosphate (UPP). Confers resistance to bacitracin. The sequence is that of Undecaprenyl-diphosphatase from Caulobacter sp. (strain K31).